The primary structure comprises 509 residues: Dihydrolipoyl dehydrogenase, mitochondrial (509 aa).

The N-terminal 35 residues, M1–Y35, are a transit peptide targeting the mitochondrion. K66 is subject to N6-acetyllysine; alternate. K66 bears the N6-succinyllysine; alternate mark. FAD contacts are provided by residues E71 to C80 and K89. C80 and C85 are disulfide-bonded. An N6-acetyllysine; alternate mark is found at K122, K132, and K143. N6-succinyllysine; alternate occurs at positions 122, 132, and 143. G154 contributes to the FAD binding site. Residues K159 and K166 each carry the N6-succinyllysine modification. T183–S185 lines the FAD pocket. NAD(+) is bound by residues G220–E227 and E243. An N6-succinyllysine mark is found at K273 and K277. V278 lines the NAD(+) pocket. Residues S285 and S297 each carry the phosphoserine modification. An NAD(+)-binding site is contributed by G314. K346 bears the N6-acetyllysine mark. Residues D355 and M361–H364 each bind FAD. K410 is subject to N6-acetyllysine; alternate. An N6-succinyllysine; alternate modification is found at K410. An N6-acetyllysine mark is found at K417 and K420. K430 carries the post-translational modification N6-succinyllysine. The Proton acceptor role is filled by H487. S502 is subject to Phosphoserine. K505 is modified (N6-acetyllysine; alternate). K505 is modified (N6-succinyllysine; alternate).

This sequence belongs to the class-I pyridine nucleotide-disulfide oxidoreductase family. As to quaternary structure, homodimer. Part of the multimeric pyruvate dehydrogenase complex that contains multiple copies of pyruvate dehydrogenase (subunits PDHA (PDHA1 or PDHA2) and PDHB, E1), dihydrolipoamide acetyltransferase (DLAT, E2) and lipoamide dehydrogenase (DLD, E3). These subunits are bound to an inner core composed of about 48 DLAT and 12 PDHX molecules (by non covalent bonds). The 2-oxoglutarate dehydrogenase complex is composed of OGDH (2-oxoglutarate dehydrogenase; E1), DLST (dihydrolipoamide succinyltransferase; E2), DLD (dihydrolipoamide dehydrogenase; E3) and the assembly factor KGD4. It contains multiple copies of the three enzymatic components (E1, E2 and E3). In the nucleus, the 2-oxoglutarate dehydrogenase complex associates with KAT2A. Interacts with PDHX. It depends on FAD as a cofactor. Tyrosine phosphorylated.

Its subcellular location is the mitochondrion matrix. The protein resides in the nucleus. The protein localises to the cell projection. It is found in the cilium. It localises to the flagellum. Its subcellular location is the cytoplasmic vesicle. The protein resides in the secretory vesicle. The protein localises to the acrosome. It catalyses the reaction N(6)-[(R)-dihydrolipoyl]-L-lysyl-[protein] + NAD(+) = N(6)-[(R)-lipoyl]-L-lysyl-[protein] + NADH + H(+). Its function is as follows. Lipoamide dehydrogenase is a component of the glycine cleavage system as well as an E3 component of three alpha-ketoacid dehydrogenase complexes (pyruvate-, alpha-ketoglutarate-, and branched-chain amino acid-dehydrogenase complex). The 2-oxoglutarate dehydrogenase complex is mainly active in the mitochondrion. A fraction of the 2-oxoglutarate dehydrogenase complex also localizes in the nucleus and is required for lysine succinylation of histones: associates with KAT2A on chromatin and provides succinyl-CoA to histone succinyltransferase KAT2A. In monomeric form may have additional moonlighting function as serine protease. Involved in the hyperactivation of spermatazoa during capacitation and in the spermatazoal acrosome reaction. This is Dihydrolipoyl dehydrogenase, mitochondrial (DLD) from Cricetulus griseus (Chinese hamster).